The sequence spans 812 residues: Lon protease (812 aa).

The region spanning 11–204 is the Lon N-terminal domain; sequence IPVLPLRDVV…YLMAMMESEI (194 aa). Position 356–363 (356–363) interacts with ATP; sequence GPPGVGKT. One can recognise a Lon proteolytic domain in the interval 592–773; it reads ENRVGQVTGL…EEEQTLSLQN (182 aa). Catalysis depends on residues serine 679 and lysine 722. Over residues 745–764 the composition is skewed to basic and acidic residues; the sequence is KENPDNAKADQDRHPVKNNE. Residues 745 to 766 are disordered; that stretch reads KENPDNAKADQDRHPVKNNEEE.

It belongs to the peptidase S16 family. As to quaternary structure, homohexamer. Organized in a ring with a central cavity. ATP binding and hydrolysis do not affect the oligomeric state of the enzyme.

It localises to the cytoplasm. It carries out the reaction Hydrolysis of proteins in presence of ATP.. With respect to regulation, contains an allosteric site (distinct from its active site), whose occupancy by an unfolded polypeptide leads to enzyme activation. Functionally, ATP-dependent serine protease that mediates the selective degradation of mutant and abnormal proteins as well as certain short-lived regulatory proteins. Required for cellular homeostasis and for survival from DNA damage and developmental changes induced by stress. Degrades polypeptides processively to yield small peptide fragments that are 5 to 10 amino acids long. Binds to DNA in a double-stranded, site-specific manner. Endogenous substrates include the regulatory proteins RcsA and SulA, the transcriptional activator SoxS, and UmuD. Its overproduction specifically inhibits translation through at least two different pathways, one of them being the YoeB-YefM toxin-antitoxin system. The polypeptide is Lon protease (Shigella dysenteriae serotype 1 (strain Sd197)).